Consider the following 934-residue polypeptide: MTELKSKGPRAPHVAGGPPSPEVGSPLLCRPAAGPFQGSQTSDTLPEVSAIPISLDGLLFPRLCQGQDPPDKKTQNQQSLSDVEGAYSRAEATRGTGGSSSRPPEKDSGLLDSVLDTLLAPSGPGQSQPSPPACEVTSSWCLFGPELPEDPPAAPATQRVLSPLMSRSGGKTEDSSGTAAAHKVLPRGLSPSRQLLLPTSGSPHWSGAPVKPSPQPTAVEVEEEDGSESEDSAGPLLKGKSRVLGGAAAGGGAAAVPPGAAAGGVGLVPKEDSRFSAPRVALVEQDAPMAPGRSPLATTMMDFIHVPIVPLNHALLAARTRQLLEDESYDGGAGAASAFAPPQSSPSASSTPVAVGDFPDCAYPPDAEPKDNAYPLYGDFQPLALKIKEEEEGAEASARSPGSYLVAGANPAAFPDFPLGPPPQLPPRAPPSRPGEAAVTAAPASASVSSASSPGSTLECILYKAEGALPQQGQFAPPPCKAPGAGGCLLPRDGLPSTSASAAAAAGAAPTLYPALGLNGLPQLGYQAAVLKEGLQQVYPPYLNYLRPDSEASQSPQYSFESLPQKICLICGDEASGCHYGVLTCGSCKVFFKRAMEGQHNYLCAGRNDCIVDKIRRKNCPACRLRKCCQAGMVLGGRKFKKFNKVRVMRALDAVALPQPVGIPNESQVLSQRFTFSPGQDIQLIPPLIKLLMSIEPDVIYAGHDNSKPDTSSSLLTSLNQLGERQLLSVVKWSKSLPGFRNLHIDDQITLIQYSWMSLMVFGLGWRSYKHVSGQMLYFAPDLILNEQRMKESSFYSLCLTMWQIPQEFVKLQVSQEEFLCMKVLLLLNTIPLEGLRSQTQFEEMRSSYIRELIKAIGLRQKGVVSSSQRFYQLTKLLDNLHDLVKQLHLYCLNTFIQSRALSVEFPEMMSEVIAAQLPKILAGMVKPLLFHKK.

The segment at M1–S49 is disordered. The tract at residues M1–L164 is AF3; mediates transcriptional activation. The tract at residues M1–I567 is modulating, Pro-Rich. Residue S20 is modified to Phosphoserine. The LXXL motif 1 motif lies at L55–L59. The tract at residues P61–G239 is disordered. S81 carries the phosphoserine modification. The short motif at L115 to L119 is the LXXL motif 2 element. Residues S130 and S162 each carry the phosphoserine modification. Residues M165 to H305 are mediates transcriptional transrepression. Positions K183–R187 match the Nuclear localization signal motif. S190 bears the Phosphoserine mark. Polar residues predominate over residues P191 to P203. S213 carries the post-translational modification Phosphoserine. Residues E220–D231 show a composition bias toward acidic residues. Phosphoserine; by MAPK1 is present on S294. The disordered stretch occupies residues G331–P375. Residues A335 to S350 show a composition bias toward low complexity. A Phosphoserine; by MAPK modification is found at S345. Residue K388 forms a Glycyl lysine isopeptide (Lys-Gly) (interchain with G-Cter in SUMO); alternate linkage. Residue K388 forms a Glycyl lysine isopeptide (Lys-Gly) (interchain with G-Cter in ubiquitin); alternate linkage. S400 carries the phosphoserine; by CDK2 modification. A disordered region spans residues P415 to P454. Positions P418–R433 are enriched in pro residues. The span at P434 to P454 shows a compositional bias: low complexity. The interval S456–R547 is AF1; mediates transcriptional activation. K532 is covalently cross-linked (Glycyl lysine isopeptide (Lys-Gly) (interchain with G-Cter in SUMO)). 2 consecutive NR C4-type zinc fingers follow at residues C568–C588 and C604–C628. A DNA-binding region (nuclear receptor) is located at residues C568–F640. S677 carries the phosphoserine modification. An NR LBD domain is found at Q680–I914. Residues L688 to K934 are AF2; mediates transcriptional activation. R767 contacts progesterone.

The protein belongs to the nuclear hormone receptor family. Interacts with SMARD1 and UNC45A. Interacts with CUEDC2; the interaction promotes ubiquitination, decreases sumoylation, and represses transcriptional activity. Interacts with PIAS3; the interaction promotes sumoylation of PR in a hormone-dependent manner, inhibits DNA-binding, and alters nuclear export. Interacts with SP1; the interaction requires ligand-induced phosphorylation on Ser-345 by ERK1/2-MAPK. Interacts with PRMT2. Interacts with NCOA2 and NCOA1. Interacts with KLF9. Interacts with GTF2B. Phosphorylated on multiple serine sites. Several of these sites are hormone-dependent. Phosphorylation on Ser-294 is highly hormone-dependent and modulates ubiquitination and sumoylation on Lys-388. Phosphorylation on Ser-345 also requires induction by hormone. Basal phosphorylation on Ser-81, Ser-162, Ser-190 and Ser-400 is increased in response to progesterone and can be phosphorylated in vitro by the CDK2-A1 complex. Increased levels of phosphorylation on Ser-400 also in the presence of EGF, heregulin, IGF, PMA and FBS. Phosphorylation at this site by CDK2 is ligand-independent, and increases nuclear translocation and transcriptional activity. Phosphorylation at Ser-162 and Ser-294, but not at Ser-190, is impaired during the G(2)/M phase of the cell cycle. Phosphorylation on Ser-345 by ERK1/2 MAPK is required for interaction with SP1. Post-translationally, sumoylation is hormone-dependent and represses transcriptional activity. Sumoylation on all three sites is enhanced by PIAS3. Desumoylated by SENP1. Sumoylation on Lys-388, the main site of sumoylation, is repressed by ubiquitination on the same site, and modulated by phosphorylation at Ser-294. In terms of processing, ubiquitination is hormone-dependent and represses sumoylation on the same site. Promoted by MAPK-mediated phosphorylation on Ser-294. Ubiquitinated by UBR5, leading to its degradation: UBR5 specifically recognizes and binds ligand-bound PGR when it is not associated with coactivators (NCOAs). In presence of NCOAs, the UBR5-degron is not accessible, preventing its ubiquitination and degradation. Palmitoylated by ZDHHC7 and ZDHHC21. Palmitoylation is required for plasma membrane targeting and for rapid intracellular signaling via ERK and AKT kinases and cAMP generation.

Its subcellular location is the nucleus. The protein resides in the cytoplasm. In terms of biological role, the steroid hormones and their receptors are involved in the regulation of eukaryotic gene expression and affect cellular proliferation and differentiation in target tissues. Transcriptional activator of several progesteron-dependent promoters in a variety of cell types. Involved in activation of SRC-dependent MAPK signaling on hormone stimulation. In Colobus guereza (Mantled guereza), this protein is Progesterone receptor (PGR).